A 351-amino-acid chain; its full sequence is Histidinol-phosphate aminotransferase 2 (351 aa).

Lys210 carries the post-translational modification N6-(pyridoxal phosphate)lysine.

Belongs to the class-II pyridoxal-phosphate-dependent aminotransferase family. Histidinol-phosphate aminotransferase subfamily. Homodimer. Pyridoxal 5'-phosphate is required as a cofactor.

The catalysed reaction is L-histidinol phosphate + 2-oxoglutarate = 3-(imidazol-4-yl)-2-oxopropyl phosphate + L-glutamate. It functions in the pathway amino-acid biosynthesis; L-histidine biosynthesis; L-histidine from 5-phospho-alpha-D-ribose 1-diphosphate: step 7/9. This is Histidinol-phosphate aminotransferase 2 (hisC2) from Rhizobium meliloti (strain 1021) (Ensifer meliloti).